The sequence spans 1391 residues: DNA-directed RNA polymerase subunit beta' (1391 aa).

Residues Cys-72, Cys-74, Cys-87, and Cys-90 each contribute to the Zn(2+) site. 3 residues coordinate Mg(2+): Asp-462, Asp-464, and Asp-466. Residues Cys-816, Cys-890, Cys-897, and Cys-900 each contribute to the Zn(2+) site.

Belongs to the RNA polymerase beta' chain family. As to quaternary structure, the RNAP catalytic core consists of 2 alpha, 1 beta, 1 beta' and 1 omega subunit. When a sigma factor is associated with the core the holoenzyme is formed, which can initiate transcription. It depends on Mg(2+) as a cofactor. The cofactor is Zn(2+).

The enzyme catalyses RNA(n) + a ribonucleoside 5'-triphosphate = RNA(n+1) + diphosphate. Its function is as follows. DNA-dependent RNA polymerase catalyzes the transcription of DNA into RNA using the four ribonucleoside triphosphates as substrates. The chain is DNA-directed RNA polymerase subunit beta' from Neisseria meningitidis serogroup A / serotype 4A (strain DSM 15465 / Z2491).